The chain runs to 370 residues: Propane 2-monooxygenase, reductase component (370 aa).

Residues 1–14 (MAPRPLRRHPPLHH) show a composition bias toward basic residues. The segment at 1–21 (MAPRPLRRHPPLHHSFHESRR) is disordered. The 2Fe-2S ferredoxin-type domain occupies 28-118 (HRINFEPVDI…DCTIELLNFD (91 aa)). Residues C62, C67, C70, and C102 each coordinate [2Fe-2S] cluster. The FAD-binding FR-type domain occupies 128–229 (IQDVRTRVTR…TGPYGSFTIK (102 aa)).

This sequence belongs to the TmoA/XamoA family. As to quaternary structure, the propane 2-monooxygenase multicomponent enzyme system is composed of an electron transfer component and a monooxygenase component interacting with the effector protein PrmD. The electron transfer component is composed of a reductase (PrmB), and the monooxygenase component is formed by a large subunit (PrmA) and a small subunit (PrmC). FAD is required as a cofactor. The cofactor is [2Fe-2S] cluster.

Functionally, reductase component of the propane 2-monooxygenase multicomponent enzyme system which is involved in the degradation of propane via the O2-dependent hydroxylation of propane. Reductase catalyzes the transfer of electrons from NADH or NADPH to monooxygenase. The protein is Propane 2-monooxygenase, reductase component of Rhodococcus jostii (strain RHA1).